The following is an 82-amino-acid chain: Small ribosomal subunit protein bS16 (82 aa).

This sequence belongs to the bacterial ribosomal protein bS16 family.

The protein is Small ribosomal subunit protein bS16 of Salmonella agona (strain SL483).